The primary structure comprises 242 residues: tRNA (guanine-N(7)-)-methyltransferase (242 aa).

Positions 66, 91, 118, and 141 each coordinate S-adenosyl-L-methionine. The active site involves D141. Substrate-binding positions include K145, D177, and 214 to 217 (TKFE).

The protein belongs to the class I-like SAM-binding methyltransferase superfamily. TrmB family. As to quaternary structure, monomer.

The enzyme catalyses guanosine(46) in tRNA + S-adenosyl-L-methionine = N(7)-methylguanosine(46) in tRNA + S-adenosyl-L-homocysteine. It functions in the pathway tRNA modification; N(7)-methylguanine-tRNA biosynthesis. In terms of biological role, catalyzes the formation of N(7)-methylguanine at position 46 (m7G46) in tRNA. The polypeptide is tRNA (guanine-N(7)-)-methyltransferase (Buchnera aphidicola subsp. Baizongia pistaciae (strain Bp)).